Reading from the N-terminus, the 206-residue chain is Methylthioribulose-1-phosphate dehydratase (206 aa).

Residues histidine 96 and histidine 98 each coordinate Zn(2+).

It belongs to the aldolase class II family. MtnB subfamily. Requires Zn(2+) as cofactor.

It carries out the reaction 5-(methylsulfanyl)-D-ribulose 1-phosphate = 5-methylsulfanyl-2,3-dioxopentyl phosphate + H2O. Its pathway is amino-acid biosynthesis; L-methionine biosynthesis via salvage pathway; L-methionine from S-methyl-5-thio-alpha-D-ribose 1-phosphate: step 2/6. Its function is as follows. Catalyzes the dehydration of methylthioribulose-1-phosphate (MTRu-1-P) into 2,3-diketo-5-methylthiopentyl-1-phosphate (DK-MTP-1-P). This chain is Methylthioribulose-1-phosphate dehydratase, found in Azotobacter vinelandii (strain DJ / ATCC BAA-1303).